An 862-amino-acid polypeptide reads, in one-letter code: Putative PIP5K1A and PSMD4-like protein (862 aa).

One can recognise a PIPK domain in the interval 28–396 (TSSALKGAIQ…WFQRFMCNTV (369 aa)). Disordered regions lie at residues 404–424 (PSPS…GSSG) and 453–481 (HLGC…PSFS). Low complexity predominate over residues 412-424 (SGSSFSQRAGSSG). One can recognise a VWFA domain in the interval 490-673 (MLTTSVDNSE…LADALISFPI (184 aa)). Residues 696-715 (SADPELALVLRVFMEEQRQR) enclose the UIM 1 domain. Residues 716–740 (QEEEARQAAAASAAEAGIATTGTED) form a disordered region. The segment covering 722–731 (QAAAASAAEA) has biased composition (low complexity). The UIM 2 domain occupies 766–783 (MTEEEKIVCAMQMSLQGA). The disordered stretch occupies residues 826-862 (NLPGVDPNNEAIRNAVGSLASQATKDSKKDKKEEDKK). The segment covering 850–862 (KDSKKDKKEEDKK) has biased composition (basic and acidic residues).

As to expression, testis-specific.

Its subcellular location is the cytoplasm. Has negligible PIP5 kinase activity. Binds to ubiquitinated proteins. This is Putative PIP5K1A and PSMD4-like protein (PIPSL) from Homo sapiens (Human).